The following is a 192-amino-acid chain: Probable nicotinate-nucleotide adenylyltransferase (192 aa).

Belongs to the NadD family.

It carries out the reaction nicotinate beta-D-ribonucleotide + ATP + H(+) = deamido-NAD(+) + diphosphate. The protein operates within cofactor biosynthesis; NAD(+) biosynthesis; deamido-NAD(+) from nicotinate D-ribonucleotide: step 1/1. Functionally, catalyzes the reversible adenylation of nicotinate mononucleotide (NaMN) to nicotinic acid adenine dinucleotide (NaAD). The polypeptide is Probable nicotinate-nucleotide adenylyltransferase (Bradyrhizobium sp. (strain BTAi1 / ATCC BAA-1182)).